Consider the following 819-residue polypeptide: Molybdenum cofactor sulfurase (819 aa).

An N6-(pyridoxal phosphate)lysine modification is found at Lys-271. Residue Cys-430 is part of the active site. Residues 650–817 (CKLLRYSSST…IGVGEEVNPD (168 aa)) enclose the MOSC domain.

The protein belongs to the class-V pyridoxal-phosphate-dependent aminotransferase family. MOCOS subfamily. Pyridoxal 5'-phosphate serves as cofactor. In terms of tissue distribution, ubiquitously expressed.

It carries out the reaction Mo-molybdopterin + L-cysteine + AH2 = thio-Mo-molybdopterin + L-alanine + A + H2O. It participates in cofactor biosynthesis; molybdopterin biosynthesis. Its function is as follows. Sulfurates the molybdenum cofactor. Sulfation of molybdenum is essential for xanthine dehydrogenase (XDH) and aldehyde oxidase (ADO) enzymes in which molybdenum cofactor is liganded by 1 oxygen and 1 sulfur atom in active form. Modulates cold stress- and osmotic stress-responsive gene expression by acting as key regulator of abscisic acid (ABA) biosynthesis. The protein is Molybdenum cofactor sulfurase (ABA3) of Arabidopsis thaliana (Mouse-ear cress).